The sequence spans 145 residues: Large ribosomal subunit protein uL15 (145 aa).

Composition is skewed to basic residues over residues 1 to 13 (MVRE…RGGH) and 19 to 29 (KAGRGKGKKGG). The interval 1–33 (MVRERTKKLRGGHYGRGMKAGRGKGKKGGRGNA) is disordered.

It belongs to the universal ribosomal protein uL15 family. As to quaternary structure, part of the 50S ribosomal subunit.

Functionally, binds to the 23S rRNA. This is Large ribosomal subunit protein uL15 from Thermoplasma volcanium (strain ATCC 51530 / DSM 4299 / JCM 9571 / NBRC 15438 / GSS1).